Consider the following 548-residue polypeptide: Probable nuclear hormone receptor HR3 (548 aa).

A disordered region spans residues 1-27 (MNNNQFHELFGSQWPPDQHGGHSSAST). The segment at residues 101-176 (IIPCKVCGDK…LGMSRDAVKF (76 aa)) is a DNA-binding region (nuclear receptor). NR C4-type zinc fingers lie at residues 104–124 (CKVC…CEGC) and 140–164 (CPRN…LQKC). Positions 198-228 (MRAQNDAAPDSVYDAQQQTPSSSDQFHGHYN) are disordered. Residues 211–222 (DAQQQTPSSSDQ) show a composition bias toward polar residues. The NR LBD domain maps to 295 to 539 (ISKVLVKSLA…PALYKELFSL (245 aa)).

It belongs to the nuclear hormone receptor family. NR1 subfamily.

The protein resides in the nucleus. In terms of biological role, putative receptor whose ligand is not yet known. The polypeptide is Probable nuclear hormone receptor HR3 (HR3) (Manduca sexta (Tobacco hawkmoth)).